The chain runs to 104 residues: Phosphoribosyl-ATP pyrophosphatase (104 aa).

This sequence belongs to the PRA-PH family.

It localises to the cytoplasm. It catalyses the reaction 1-(5-phospho-beta-D-ribosyl)-ATP + H2O = 1-(5-phospho-beta-D-ribosyl)-5'-AMP + diphosphate + H(+). The protein operates within amino-acid biosynthesis; L-histidine biosynthesis; L-histidine from 5-phospho-alpha-D-ribose 1-diphosphate: step 2/9. The protein is Phosphoribosyl-ATP pyrophosphatase of Streptococcus thermophilus (strain ATCC BAA-491 / LMD-9).